The following is a 381-amino-acid chain: Penicillin-binding protein 4 (381 aa).

The Acyl-ester intermediate role is filled by Ser60. A helical membrane pass occupies residues 271 to 291; that stretch reads VAGCLDTWSFMATGWGHGWAL. 299 to 308 contributes to the NAD(+) binding site; the sequence is GYGHDGASGG. The chain crosses the membrane as a helical span at residues 315-340; the sequence is VVPGSGVVAALLTNGGVATSFFTDLF.

This sequence belongs to the beta-lactamase family.

The protein localises to the cell membrane. Its function is as follows. Involved in cell wall biosynthesis and may also act as a sensor of external penicillins. The polypeptide is Penicillin-binding protein 4 (pbp) (Amycolatopsis lactamdurans (Nocardia lactamdurans)).